The following is a 411-amino-acid chain: Secretion apparatus protein BsaZ (411 aa).

Helical transmembrane passes span 28 to 48, 80 to 100, 137 to 157, and 175 to 195; these read IVAL…VDLT, IAAP…LVQS, ALLY…LYHA, and IVLT…VLIL. Residues 341–411 are disordered; the sequence is AANRGGPPPE…APARTGDQNA (71 aa). The span at 370 to 404 shows a compositional bias: low complexity; it reads DACADNAFPDDAPPGAAAPNAGSPDGPAPDGGAPA.

It belongs to the type III secretion exporter family.

The protein resides in the cell membrane. Functionally, part of the bsa type III secretion system, is involved in the intracellular replication of invading bacteria inside the host cell. Probably necessary for the lysis of the vacuole membrane and escape into the host cell cytoplasm. The protein is Secretion apparatus protein BsaZ (bsaZ) of Burkholderia pseudomallei (strain 1026b).